The primary structure comprises 408 residues: uncharacterized protein (408 aa).

3 residues coordinate a divalent metal cation: Glu35, Asp61, and Asn96.

This sequence belongs to the metallophosphoesterase superfamily. A divalent metal cation serves as cofactor.

This is an uncharacterized protein from Bacillus subtilis (strain 168).